A 361-amino-acid polypeptide reads, in one-letter code: Prostaglandin D2 receptor (361 aa).

Residues 1–21 lie on the Extracellular side of the membrane; sequence MRPLFYRCHNTTSVEKGNSAT. A glycan (N-linked (GlcNAc...) asparagine) is linked at Asn10. The helical transmembrane segment at 22–42 threads the bilayer; it reads MGGVLFSTGLVGNLLALGLLA. The Cytoplasmic portion of the chain corresponds to 43–58; the sequence is RSGLGSCPPRSPRPPP. Residues 59 to 79 form a helical membrane-spanning segment; the sequence is SVFYVLVFGLTITDLLGKCLV. The Extracellular portion of the chain corresponds to 80-107; it reads SPFVLSAYAQNRSLRELVPGSDSSLCQA. Asn90 carries N-linked (GlcNAc...) asparagine glycosylation. Cysteines 105 and 183 form a disulfide. A helical membrane pass occupies residues 108-128; sequence FAFIMSFFGLASTLQLLAMAL. Over 129–150 the chain is Cytoplasmic; it reads ECWLSLGHPFFHRRHLTPRRGA. A helical membrane pass occupies residues 151-171; it reads MVAPVVGAFCLAFCALPLVGF. Residues 172–195 lie on the Extracellular side of the membrane; sequence GKFVQYCPGTWCFFQMVHEERSLS. The helical transmembrane segment at 196–216 threads the bilayer; it reads VLSYSVLYASLMLLLVLAIVL. Over 217-262 the chain is Cytoplasmic; that stretch reads CNLSAMRNLYAMHLRLRGLLRPGSRERAEPGAGEREATPLHLEELD. A helical membrane pass occupies residues 263 to 283; the sequence is HLLLLALMTVLFTMCSLPLIY. Topologically, residues 284–310 are extracellular; that stretch reads RAYYGAFKAVPEQNGTTEETEDLRALR. N-linked (GlcNAc...) asparagine glycosylation occurs at Asn297. Residues 311–331 traverse the membrane as a helical segment; the sequence is FLSVISIVDPWIFIIFRTSVF. Residues 332 to 361 lie on the Cytoplasmic side of the membrane; the sequence is RMFFRKIFIRPLIYRNWHSNSCQTNMESSL.

The protein belongs to the G-protein coupled receptor 1 family.

The protein resides in the cell membrane. Receptor for prostaglandin D2 (PGD2). The activity of this receptor is mainly mediated by G(s) proteins that stimulate adenylate cyclase, resulting in an elevation of intracellular cAMP. A mobilization of calcium is also observed, but without formation of inositol 1,4,5-trisphosphate. Involved in PLA2G3-dependent maturation of mast cells. PLA2G3 is secreted by immature mast cells and acts on nearby fibroblasts upstream to PTDGS to synthesize PGD2, which in turn promotes mast cell maturation and degranulation via PTGDR. The polypeptide is Prostaglandin D2 receptor (PTGDR) (Bos taurus (Bovine)).